We begin with the raw amino-acid sequence, 348 residues long: Rhodopsin (348 aa).

At M1 the chain carries N-acetylmethionine. The Extracellular portion of the chain corresponds to 1-36 (MNGTEGPDFYIPMSNQTGVVRSPFEYPQYYLAEPWQ). 2 N-linked (GlcNAc...) asparagine glycosylation sites follow: N2 and N15. The chain crosses the membrane as a helical span at residues 37–61 (FSMLAAYMFLLIVLGFPINFLTLYV). At 62 to 73 (TVQHKKLRTPLN) the chain is on the cytoplasmic side. Residues 74-96 (YILLNLAVADLFMVLGGFTTTLY) traverse the membrane as a helical segment. Topologically, residues 97-110 (TSLHGYFVFGPTGC) are extracellular. Residues C110 and C187 are joined by a disulfide bond. Residues 111-133 (NVEGFFATLGGEIALWSLVVLAI) form a helical membrane-spanning segment. Residues 134–136 (ERY) carry the 'Ionic lock' involved in activated form stabilization motif. Over 134–152 (ERYVVVCKPMSNFRFGENH) the chain is Cytoplasmic. Residues 153 to 173 (AIMGVAFTWIMALACAAPPLV) traverse the membrane as a helical segment. Topologically, residues 174–202 (GWSRYIPEGMQCSCGIDYYTLKPEVNNES) are extracellular. Zn(2+) is bound at residue E201. The helical transmembrane segment at 203–224 (FVIYMFVVHFTIPLIIIFFCYG) threads the bilayer. Over 225 to 252 (QLVFTVKEAAAQQQESATTQKAEKEVTR) the chain is Cytoplasmic. The helical transmembrane segment at 253–274 (MVIIMVIAFLICWVPYASVAFY) threads the bilayer. The Extracellular portion of the chain corresponds to 275–286 (IFTHQGSNFGPI). Q279 serves as a coordination point for Zn(2+). A helical transmembrane segment spans residues 287–308 (FMTIPAFFAKSSSIYNPVIYIM). Residue K296 is modified to N6-(retinylidene)lysine. Topologically, residues 309 to 348 (MNKQFRNCMLTTICCGKNPLGDDEASATASKTETSQVAPA) are cytoplasmic. Residues C322 and C323 are each lipidated (S-palmitoyl cysteine). An interaction with SAG region spans residues 330 to 348 (DDEASATASKTETSQVAPA). The residue at position 334 (S334) is a Phosphoserine. At T336 the chain carries Phosphothreonine. S338 bears the Phosphoserine mark. 2 positions are modified to phosphothreonine: T340 and T342. At S343 the chain carries Phosphoserine.

It belongs to the G-protein coupled receptor 1 family. Opsin subfamily. As to quaternary structure, homodimer. May form a complex composed of RHO, GRK1 and RCVRN in a Ca(2+)-dependent manner; RCVRN prevents the interaction between GRK1 and RHO. Interacts with GRK1. Interacts (phosphorylated form) with SAG. Interacts with GNAT1. Interacts with GNAT3. SAG and G-proteins compete for a common binding site. Interacts with PRCD; the interaction promotes PRCD stability. Forms a complex with ASAP1 and ARF4. Forms a complex with ASAP1, RAB11A, Rabin8/RAB3IP, ARF4 and RAB11FIP3; the complex regulates Golgi-to-cilia rhodopsin/RHO transport in photoreceptors. Phosphorylated on some or all of the serine and threonine residues present in the C-terminal region. In terms of processing, contains one covalently linked retinal chromophore. Upon light absorption, the covalently bound 11-cis-retinal is converted to all-trans-retinal. After hydrolysis of the Schiff base and release of the covalently bound all-trans-retinal, active rhodopsin is regenerated by binding of a fresh molecule of 11-cis-retinal.

It localises to the membrane. The protein resides in the cell projection. It is found in the cilium. Its subcellular location is the photoreceptor outer segment. In terms of biological role, photoreceptor required for image-forming vision at low light intensity. Required for photoreceptor cell viability after birth. Light-induced isomerization of 11-cis to all-trans retinal triggers a conformational change that activates signaling via G-proteins. Subsequent receptor phosphorylation mediates displacement of the bound G-protein alpha subunit by the arrestin SAG and terminates signaling. The polypeptide is Rhodopsin (RHO) (Oryctolagus cuniculus (Rabbit)).